Reading from the N-terminus, the 452-residue chain is NADH-quinone oxidoreductase subunit H (452 aa).

9 helical membrane-spanning segments follow: residues 28-48, 96-116, 136-156, 177-197, 210-230, 264-286, 301-321, 335-355, and 366-386; these read IILI…LMMI, VIYI…FSVI, LPVA…GIVL, VISY…YAGT, IWFA…MIGE, AEYV…GYLA, WWPA…FVWV, KLGW…VAVI, and YVTA…LWAW.

The protein belongs to the complex I subunit 1 family. In terms of assembly, NDH-1 is composed of 14 different subunits. Subunits NuoA, H, J, K, L, M, N constitute the membrane sector of the complex.

It is found in the cell membrane. It carries out the reaction a quinone + NADH + 5 H(+)(in) = a quinol + NAD(+) + 4 H(+)(out). NDH-1 shuttles electrons from NADH, via FMN and iron-sulfur (Fe-S) centers, to quinones in the respiratory chain. The immediate electron acceptor for the enzyme in this species is believed to be ubiquinone. Couples the redox reaction to proton translocation (for every two electrons transferred, four hydrogen ions are translocated across the cytoplasmic membrane), and thus conserves the redox energy in a proton gradient. This subunit may bind ubiquinone. The sequence is that of NADH-quinone oxidoreductase subunit H from Thermobifida fusca (strain YX).